The chain runs to 159 residues: 6,7-dimethyl-8-ribityllumazine synthase (159 aa).

Residues Trp-30, 64–66 (TFE), and 88–90 (CVI) contribute to the 5-amino-6-(D-ribitylamino)uracil site. 93–94 (ET) serves as a coordination point for (2S)-2-hydroxy-3-oxobutyl phosphate. His-96 (proton donor) is an active-site residue. A 5-amino-6-(D-ribitylamino)uracil-binding site is contributed by Phe-121. Arg-135 is a binding site for (2S)-2-hydroxy-3-oxobutyl phosphate.

It belongs to the DMRL synthase family.

The enzyme catalyses (2S)-2-hydroxy-3-oxobutyl phosphate + 5-amino-6-(D-ribitylamino)uracil = 6,7-dimethyl-8-(1-D-ribityl)lumazine + phosphate + 2 H2O + H(+). It participates in cofactor biosynthesis; riboflavin biosynthesis; riboflavin from 2-hydroxy-3-oxobutyl phosphate and 5-amino-6-(D-ribitylamino)uracil: step 1/2. Its function is as follows. Catalyzes the formation of 6,7-dimethyl-8-ribityllumazine by condensation of 5-amino-6-(D-ribitylamino)uracil with 3,4-dihydroxy-2-butanone 4-phosphate. This is the penultimate step in the biosynthesis of riboflavin. This chain is 6,7-dimethyl-8-ribityllumazine synthase, found in Cytophaga hutchinsonii (strain ATCC 33406 / DSM 1761 / CIP 103989 / NBRC 15051 / NCIMB 9469 / D465).